Here is a 568-residue protein sequence, read N- to C-terminus: Serine/threonine-protein kinase RIO1 (568 aa).

Disordered regions lie at residues 14-70 and 83-109; these read GQFD…DDDW and YVWN…STPA. A phosphoserine mark is found at Ser-21 and Ser-22. Basic and acidic residues predominate over residues 24–38; sequence SENRDLKTVKEKDDI. The segment covering 51 to 70 has biased composition (acidic residues); the sequence is GEGEIEDEEEEGYDDDDDDW. Residues 87 to 105 show a composition bias toward polar residues; that stretch reads GGSNPQANRQTSDSSSAKM. In terms of domain architecture, Protein kinase spans 180-479; it reads TEINGCISTG…TGLKKDLSGV (300 aa). Lys-208, Ser-278, and Ile-280 together coordinate ATP. Asp-324 serves as the catalytic Proton acceptor. Asn-329 and Asp-341 together coordinate Mg(2+). Asp-341 functions as the 4-aspartylphosphate intermediate in the catalytic mechanism. The segment at 490-568 is disordered; it reads VEERTCSDSE…EKTAKTKKGK (79 aa). Acidic residues predominate over residues 497–513; the sequence is DSEDIGSSECSDTDSEE. Residues 514 to 543 are compositionally biased toward basic and acidic residues; sequence QGDHARPKKHTTDPDIDKKERKKMVKEAQR. Residues 544 to 568 show a composition bias toward basic residues; sequence EKRKNKIPKHVKKRKEKTAKTKKGK.

It belongs to the protein kinase superfamily. RIO-type Ser/Thr kinase family. Associates with the precursor of the 40S ribosome subunit. Interacts (via its N-terminus) with PRMT5 (via its N-terminus). Interacts with WDR77. Found in a PRMT5 complex composed of PRMT5, WDR77 and RIOK1. Interacts (via its C-terminus) with NCL; this interaction targets NCL for PRTM5 methylation. Requires Mg(2+) as cofactor.

The protein localises to the cytoplasm. It is found in the cytosol. The enzyme catalyses L-seryl-[protein] + ATP = O-phospho-L-seryl-[protein] + ADP + H(+). The catalysed reaction is L-threonyl-[protein] + ATP = O-phospho-L-threonyl-[protein] + ADP + H(+). It catalyses the reaction ATP + H2O = ADP + phosphate + H(+). Involved in the final steps of cytoplasmic maturation of the 40S ribosomal subunit. Involved in processing of 18S-E pre-rRNA to the mature 18S rRNA. Required for the recycling of NOB1 and PNO1 from the late 40S precursor. The association with the very late 40S subunit intermediate may involve a translation-like checkpoint point cycle preceeding the binding to the 60S ribosomal subunit. Despite the protein kinase domain is proposed to act predominantly as an ATPase. The catalytic activity regulates its dynamic association with the 40S subunit. In addition to its role in ribosomal biogenesis acts as an adapter protein by recruiting NCL/nucleolin the to PRMT5 complex for its symmetrical methylation. The polypeptide is Serine/threonine-protein kinase RIO1 (Homo sapiens (Human)).